Reading from the N-terminus, the 324-residue chain is D-alanine--D-alanine ligase (324 aa).

In terms of domain architecture, ATP-grasp spans 121-321 (NQYLKGFGIR…IKDVMTDIIE (201 aa)). An ATP-binding site is contributed by 149–204 (INKIGLPCFIKPNAGGSSFGVTKVKTKEDIQPAIEKAFEESDEVMIEAFMKGTEIT). Mg(2+)-binding residues include Asp275, Glu288, and Asn290.

Belongs to the D-alanine--D-alanine ligase family. Mg(2+) is required as a cofactor. It depends on Mn(2+) as a cofactor.

Its subcellular location is the cytoplasm. The catalysed reaction is 2 D-alanine + ATP = D-alanyl-D-alanine + ADP + phosphate + H(+). It functions in the pathway cell wall biogenesis; peptidoglycan biosynthesis. Its function is as follows. Cell wall formation. The polypeptide is D-alanine--D-alanine ligase (Phocaeicola vulgatus (strain ATCC 8482 / DSM 1447 / JCM 5826 / CCUG 4940 / NBRC 14291 / NCTC 11154) (Bacteroides vulgatus)).